Consider the following 316-residue polypeptide: Nucleotide-binding protein NFA_35930 (316 aa).

ATP is bound at residue 32–39 (GLSGAGRG). A GTP-binding site is contributed by 83-86 (DVRS).

The protein belongs to the RapZ-like family.

Its function is as follows. Displays ATPase and GTPase activities. The sequence is that of Nucleotide-binding protein NFA_35930 from Nocardia farcinica (strain IFM 10152).